Here is a 733-residue protein sequence, read N- to C-terminus: Acyl-coenzyme A oxidase (733 aa).

It belongs to the acyl-CoA oxidase family. It depends on FAD as a cofactor.

It localises to the peroxisome. It carries out the reaction a 2,3-saturated acyl-CoA + O2 = a (2E)-enoyl-CoA + H2O2. It participates in lipid metabolism; peroxisomal fatty acid beta-oxidation. The chain is Acyl-coenzyme A oxidase (POX1) from Eremothecium gossypii (strain ATCC 10895 / CBS 109.51 / FGSC 9923 / NRRL Y-1056) (Yeast).